Here is a 421-residue protein sequence, read N- to C-terminus: Serine--tRNA ligase (421 aa).

Residue 231–233 (TGE) coordinates L-serine. Residue 262 to 264 (RRE) coordinates ATP. E285 contacts L-serine. 349–352 (EVSS) is a binding site for ATP. Residue S384 coordinates L-serine.

This sequence belongs to the class-II aminoacyl-tRNA synthetase family. Type-1 seryl-tRNA synthetase subfamily. As to quaternary structure, homodimer. The tRNA molecule binds across the dimer.

It localises to the cytoplasm. The enzyme catalyses tRNA(Ser) + L-serine + ATP = L-seryl-tRNA(Ser) + AMP + diphosphate + H(+). It carries out the reaction tRNA(Sec) + L-serine + ATP = L-seryl-tRNA(Sec) + AMP + diphosphate + H(+). Its pathway is aminoacyl-tRNA biosynthesis; selenocysteinyl-tRNA(Sec) biosynthesis; L-seryl-tRNA(Sec) from L-serine and tRNA(Sec): step 1/1. Catalyzes the attachment of serine to tRNA(Ser). Is also able to aminoacylate tRNA(Sec) with serine, to form the misacylated tRNA L-seryl-tRNA(Sec), which will be further converted into selenocysteinyl-tRNA(Sec). The chain is Serine--tRNA ligase from Methylacidiphilum infernorum (isolate V4) (Methylokorus infernorum (strain V4)).